Consider the following 300-residue polypeptide: 7-methylguanosine phosphate-specific 5'-nucleotidase (300 aa).

The active-site Nucleophile is the D41. The Mg(2+) site is built by D41 and D43. Residue D43 is the Proton donor of the active site. Position 88 (E88) interacts with CMP. Residue E88 coordinates N(7)-methyl-GMP. Substrate contacts are provided by residues 156-157 (SA) and K205. Position 230 (D230) interacts with Mg(2+). The residue at position 256 (K256) is an N6-acetyllysine.

This sequence belongs to the pyrimidine 5'-nucleotidase family. Monomer.

It is found in the cytoplasm. It carries out the reaction N(7)-methyl-GMP + H2O = N(7)-methylguanosine + phosphate. The enzyme catalyses CMP + H2O = cytidine + phosphate. It catalyses the reaction a ribonucleoside 5'-phosphate + H2O = a ribonucleoside + phosphate. Functionally, specifically hydrolyzes 7-methylguanosine monophosphate (m(7)GMP) to 7-methylguanosine and inorganic phosphate. The specific activity for m(7)GMP may protect cells against undesired salvage of m(7)GMP and its incorporation into nucleic acids. Also has weak activity for CMP. UMP and purine nucleotides are poor substrates. The sequence is that of 7-methylguanosine phosphate-specific 5'-nucleotidase (NT5C3B) from Homo sapiens (Human).